The chain runs to 179 residues: Protein Syd (179 aa).

The protein belongs to the Syd family.

It is found in the cell inner membrane. In terms of biological role, interacts with the SecY protein in vivo. May bind preferentially to an uncomplexed state of SecY, thus functioning either as a chelating agent for excess SecY in the cell or as a regulatory factor that negatively controls the translocase function. This Pseudoalteromonas translucida (strain TAC 125) protein is Protein Syd.